Reading from the N-terminus, the 449-residue chain is Trigger factor (449 aa).

In terms of domain architecture, PPIase FKBP-type spans glycine 173–proline 258.

It belongs to the FKBP-type PPIase family. Tig subfamily.

It localises to the cytoplasm. It catalyses the reaction [protein]-peptidylproline (omega=180) = [protein]-peptidylproline (omega=0). In terms of biological role, involved in protein export. Acts as a chaperone by maintaining the newly synthesized protein in an open conformation. Functions as a peptidyl-prolyl cis-trans isomerase. The protein is Trigger factor of Cupriavidus metallidurans (strain ATCC 43123 / DSM 2839 / NBRC 102507 / CH34) (Ralstonia metallidurans).